A 392-amino-acid chain; its full sequence is Formate-dependent phosphoribosylglycinamide formyltransferase (392 aa).

N(1)-(5-phospho-beta-D-ribosyl)glycinamide contacts are provided by residues 22–23 (EL) and E82. Residues R114, K155, 160–165 (SSGKGQ), 195–198 (EGVV), and E203 contribute to the ATP site. Residues 119–308 (RLAAEELQLP…EFALHVRAFL (190 aa)) enclose the ATP-grasp domain. Residues E267 and E279 each contribute to the Mg(2+) site. Residues D286, K355, and 362-363 (RR) contribute to the N(1)-(5-phospho-beta-D-ribosyl)glycinamide site.

This sequence belongs to the PurK/PurT family. In terms of assembly, homodimer.

The catalysed reaction is N(1)-(5-phospho-beta-D-ribosyl)glycinamide + formate + ATP = N(2)-formyl-N(1)-(5-phospho-beta-D-ribosyl)glycinamide + ADP + phosphate + H(+). The protein operates within purine metabolism; IMP biosynthesis via de novo pathway; N(2)-formyl-N(1)-(5-phospho-D-ribosyl)glycinamide from N(1)-(5-phospho-D-ribosyl)glycinamide (formate route): step 1/1. In terms of biological role, involved in the de novo purine biosynthesis. Catalyzes the transfer of formate to 5-phospho-ribosyl-glycinamide (GAR), producing 5-phospho-ribosyl-N-formylglycinamide (FGAR). Formate is provided by PurU via hydrolysis of 10-formyl-tetrahydrofolate. The chain is Formate-dependent phosphoribosylglycinamide formyltransferase from Klebsiella pneumoniae (strain 342).